A 339-amino-acid chain; its full sequence is Phenylalanine--tRNA ligase alpha subunit (339 aa).

Position 254 (E254) interacts with Mg(2+).

It belongs to the class-II aminoacyl-tRNA synthetase family. Phe-tRNA synthetase alpha subunit type 1 subfamily. As to quaternary structure, tetramer of two alpha and two beta subunits. It depends on Mg(2+) as a cofactor.

It is found in the cytoplasm. It catalyses the reaction tRNA(Phe) + L-phenylalanine + ATP = L-phenylalanyl-tRNA(Phe) + AMP + diphosphate + H(+). This chain is Phenylalanine--tRNA ligase alpha subunit, found in Acetivibrio thermocellus (strain ATCC 27405 / DSM 1237 / JCM 9322 / NBRC 103400 / NCIMB 10682 / NRRL B-4536 / VPI 7372) (Clostridium thermocellum).